The primary structure comprises 477 residues: Bifunctional protein HldE (477 aa).

Positions 1–318 (MKLSMPRFDQ…RAIQREEGSE (318 aa)) are ribokinase. 194–197 (NLSE) lines the ATP pocket. The active site involves D263. The cytidylyltransferase stretch occupies residues 343–477 (FTNGCFDILH…EKIRKTDKAE (135 aa)).

In the N-terminal section; belongs to the carbohydrate kinase PfkB family. This sequence in the C-terminal section; belongs to the cytidylyltransferase family. In terms of assembly, homodimer.

It catalyses the reaction D-glycero-beta-D-manno-heptose 7-phosphate + ATP = D-glycero-beta-D-manno-heptose 1,7-bisphosphate + ADP + H(+). The catalysed reaction is D-glycero-beta-D-manno-heptose 1-phosphate + ATP + H(+) = ADP-D-glycero-beta-D-manno-heptose + diphosphate. Its pathway is nucleotide-sugar biosynthesis; ADP-L-glycero-beta-D-manno-heptose biosynthesis; ADP-L-glycero-beta-D-manno-heptose from D-glycero-beta-D-manno-heptose 7-phosphate: step 1/4. The protein operates within nucleotide-sugar biosynthesis; ADP-L-glycero-beta-D-manno-heptose biosynthesis; ADP-L-glycero-beta-D-manno-heptose from D-glycero-beta-D-manno-heptose 7-phosphate: step 3/4. Catalyzes the phosphorylation of D-glycero-D-manno-heptose 7-phosphate at the C-1 position to selectively form D-glycero-beta-D-manno-heptose-1,7-bisphosphate. In terms of biological role, catalyzes the ADP transfer from ATP to D-glycero-beta-D-manno-heptose 1-phosphate, yielding ADP-D-glycero-beta-D-manno-heptose. In Pseudomonas fluorescens (strain ATCC BAA-477 / NRRL B-23932 / Pf-5), this protein is Bifunctional protein HldE.